Here is a 215-residue protein sequence, read N- to C-terminus: uncharacterized protein (215 aa).

6 helical membrane passes run 3–23 (LLAYIPTNVLATYLTLVLRSI), 30–50 (ANLLAIPNFVLHILLLFGLTW), 59–79 (LGLSLLQPLYTVPLLAVLRFW), 87–107 (WGTYAIITLILDNPYIHAICV), 122–142 (VSTCLYNMFVQAGLIISSNIY), and 156–176 (VLFGLALFMFPILIGSKLIYV).

It belongs to the major facilitator superfamily. Allantoate permease family.

The protein resides in the membrane. This is an uncharacterized protein from Saccharomyces cerevisiae (strain ATCC 204508 / S288c) (Baker's yeast).